The chain runs to 333 residues: Large ribosomal subunit protein uL3 (333 aa).

2 stretches are compositionally biased toward basic residues: residues 1–10 (MGMKRNRPRR) and 17–26 (PRKRAKRPVP). The segment at 1–29 (MGMKRNRPRRGSLAFSPRKRAKRPVPKIR) is disordered.

This sequence belongs to the universal ribosomal protein uL3 family. Part of the 50S ribosomal subunit. Forms a cluster with proteins L14 and L24e.

Its function is as follows. One of the primary rRNA binding proteins, it binds directly near the 3'-end of the 23S rRNA, where it nucleates assembly of the 50S subunit. In Methanococcus aeolicus (strain ATCC BAA-1280 / DSM 17508 / OCM 812 / Nankai-3), this protein is Large ribosomal subunit protein uL3.